The chain runs to 51 residues: Large ribosomal subunit protein eL39 (51 aa).

A compositionally biased stretch (basic residues) spans 1–19 (MSHNMKGQKKRLAKAHKQN). The tract at residues 1-23 (MSHNMKGQKKRLAKAHKQNSRVP) is disordered.

Belongs to the eukaryotic ribosomal protein eL39 family.

The polypeptide is Large ribosomal subunit protein eL39 (Methanosarcina mazei (strain ATCC BAA-159 / DSM 3647 / Goe1 / Go1 / JCM 11833 / OCM 88) (Methanosarcina frisia)).